Reading from the N-terminus, the 263-residue chain is Glutamate racemase (263 aa).

Substrate-binding positions include 13–14 (DS) and 45–46 (YG). Catalysis depends on cysteine 77, which acts as the Proton donor/acceptor. Substrate is bound at residue 78–79 (NT). The Proton donor/acceptor role is filled by cysteine 185. A substrate-binding site is contributed by 186 to 187 (TH).

This sequence belongs to the aspartate/glutamate racemases family.

The catalysed reaction is L-glutamate = D-glutamate. It participates in cell wall biogenesis; peptidoglycan biosynthesis. In terms of biological role, provides the (R)-glutamate required for cell wall biosynthesis. The protein is Glutamate racemase of Vibrio vulnificus (strain CMCP6).